The sequence spans 201 residues: MSGTSESELKHLLSSLHLTYGFLGTFDCRFPGFLQKNKVQTAIVNTGPREKGGVHWVAMAWDPIYYKMYIFDPLGWKESQLQSLYNYSYQSMLKRSALTESERCITVEKNTQSVQCTCSGACGLFCVFFLYCFYKYRGKAFNNELFQSLNGASPSLTPSDPSSLHKNQDILYDFFICKSSYFRHNKKMLISNTKLGLIKSH.

Active-site residues include histidine 55, aspartate 72, and cysteine 122.

The protein belongs to the peptidase C5 family. As to quaternary structure, interacts with protease cofactor pVI-C; this interaction is necessary for protease activation.

The protein resides in the virion. It localises to the host nucleus. The enzyme catalyses Cleaves proteins of the adenovirus and its host cell at two consensus sites: -Yaa-Xaa-Gly-Gly-|-Xaa- and -Yaa-Xaa-Gly-Xaa-|-Gly- (in which Yaa is Met, Ile or Leu, and Xaa is any amino acid).. Its activity is regulated as follows. Requires DNA and protease cofactor for maximal activation. Inside nascent virions, becomes partially activated by binding to the viral DNA, allowing it to cleave the cofactor that binds to the protease and fully activates it. Actin, like the viral protease cofactor, seems to act as a cofactor in the cleavage of cytokeratin 18 and of actin itself. Its function is as follows. Cleaves viral precursor proteins (pTP, pIIIa, pVI, pVII, pVIII, and pX) inside newly assembled particles giving rise to mature virions. Protease complexed to its cofactor slides along the viral DNA to specifically locate and cleave the viral precursors. Mature virions have a weakened organization compared to the unmature virions, thereby facilitating subsequent uncoating. Without maturation, the particle lacks infectivity and is unable to uncoat. Late in adenovirus infection, in the cytoplasm, may participate in the cytoskeleton destruction. Cleaves host cell cytoskeletal keratins K7 and K18. This chain is Protease, found in Bovine adenovirus 4 (BAdV-4).